Here is a 167-residue protein sequence, read N- to C-terminus: Putative universal stress protein SSP1056 (167 aa).

This sequence belongs to the universal stress protein A family.

It localises to the cytoplasm. The sequence is that of Putative universal stress protein SSP1056 from Staphylococcus saprophyticus subsp. saprophyticus (strain ATCC 15305 / DSM 20229 / NCIMB 8711 / NCTC 7292 / S-41).